Consider the following 327-residue polypeptide: Phenylalanine--tRNA ligase alpha subunit (327 aa).

Glu-252 is a Mg(2+) binding site.

The protein belongs to the class-II aminoacyl-tRNA synthetase family. Phe-tRNA synthetase alpha subunit type 1 subfamily. Tetramer of two alpha and two beta subunits. Requires Mg(2+) as cofactor.

It localises to the cytoplasm. It catalyses the reaction tRNA(Phe) + L-phenylalanine + ATP = L-phenylalanyl-tRNA(Phe) + AMP + diphosphate + H(+). The polypeptide is Phenylalanine--tRNA ligase alpha subunit (Shewanella sp. (strain MR-7)).